The following is a 1165-amino-acid chain: Disease resistance protein RPS4B (1165 aa).

The TIR domain occupies 12-174; that stretch reads PQHQVFINFR…EIVKEVKKVL (163 aa). The active site involves Glu86. In terms of domain architecture, NB-ARC spans 211 to 474; the sequence is KQRLKELEEK…FLDIACFRSQ (264 aa). An LRR 1 repeat occupies 592–613; the sequence is SHCPHECLTNNKINMPDGLELP. The stretch at 614 to 635 is one LRR 2; degenerate repeat; sequence LKEVRCLHWLKFPLEELPNDFD. LRR repeat units lie at residues 636–659, 684–703, 704–725, 726–748, 772–794, and 795–818; these read PINLVDLKLPYSEIERLWDGVKDT, NLQRLNLEGCTSLESLRDVN, LTSLKTLTLSNCSNFKEFPLIP, ENLKALYLDGTSISQLPDNVGNL, LKTLQKLVLSGCSKLKEFPEINK, and SSLKILLLDGTSIKTMPQLPSVQY. The stretch at 819-836 is one LRR 9; degenerate repeat; it reads LCLSRNDHLIYLPAGINQ. The LRR 10 repeat unit spans residues 837–863; sequence VSQLTRLDLKYCTKLTYVPELPPTLQY.

It belongs to the disease resistance TIR-NB-LRR family. As to quaternary structure, interacts with RRS1B. RPS4B-RRS1B heterodimer interacts with the bacterial effectors AvrRps4 and PopP2.

The protein localises to the nucleus. It catalyses the reaction NAD(+) + H2O = ADP-D-ribose + nicotinamide + H(+). In terms of biological role, disease resistance (R) protein that specifically recognizes the AvrRps4 type III effector avirulence protein from P.syringae. Heterodimerization with RRS1B is required to form a functional complex to recognize AvrRps4 and to mediate the hypersensitive response. In Arabidopsis thaliana (Mouse-ear cress), this protein is Disease resistance protein RPS4B.